The primary structure comprises 200 residues: Dephospho-CoA kinase (200 aa).

The region spanning 3–200 (RIGLTGGIGS…LIAEILTRIK (198 aa)) is the DPCK domain. 11 to 16 (GSGKST) contacts ATP.

It belongs to the CoaE family.

Its subcellular location is the cytoplasm. The enzyme catalyses 3'-dephospho-CoA + ATP = ADP + CoA + H(+). The protein operates within cofactor biosynthesis; coenzyme A biosynthesis; CoA from (R)-pantothenate: step 5/5. In terms of biological role, catalyzes the phosphorylation of the 3'-hydroxyl group of dephosphocoenzyme A to form coenzyme A. In Corynebacterium efficiens (strain DSM 44549 / YS-314 / AJ 12310 / JCM 11189 / NBRC 100395), this protein is Dephospho-CoA kinase.